Here is an 87-residue protein sequence, read N- to C-terminus: UPF0250 protein NE1487 (87 aa).

It belongs to the UPF0250 family.

This chain is UPF0250 protein NE1487, found in Nitrosomonas europaea (strain ATCC 19718 / CIP 103999 / KCTC 2705 / NBRC 14298).